The chain runs to 2273 residues: KGKTITHGQSWGARRIHSHFYITIFTITCIRIGQYKLALYLDPYRFYNITGSQIVRLKGQRPEYRKRIFAHSYRHSSRIGLNFPSRRRYSNYVDRGNIHKHTRLPPQFIGLNTVESAQPSILRDFVDLRGGHTVISKILIANNGIAAVKEMRSIRKWAYETFNDEKIIQFVVMATPDDLHANSEYIRMADQYVQVPGGTNNNNYANIDLILDVAEQTDVDAVWAGWGHASENPCLPELLASSQRKILFIGPPGRAMRSLGDKISSTIVAQSAKIPCIPWSGSHIDTIHIDNKTNFVSVPDDVYVRGCCSSPEDALEKAKLIGFPVMIKASEGGGGKGIRRVDNQDDFIALYRQAVNETPGSPMFVMKVVTDARHLEVQLLADQYGTNITLFGRDCSIQRRHQKIIEEAPVTITKPETFQRMERAAIRLGELVGYVSAGTVEYLYSPKDDKFYFLELNPRLQVEHPTTEMISGVNLPATQLQIAMGIPMHMISDIRKLYGLDPTGTSYIDFKNLKRPSPKGHCISCRITSEDPNEGFKPSTGKIHELNFRSSSNVWGYFSVGNNGAIHSFSDSQFGHIFAVGNDRQDAKQNMVLALKDFSIRGEFKTPIEYLIELLETRDFESNNISTGWLDDLILKNLSSDSKLDPTLAIICGAAMKAYVFTEKVRNKYLELLRRGQVPPKDFLKTKFPVDFIFDNNRYLFNVAQSSEEQFILSINKSQCEVNVQKLSSDCLLISVDGKCHTVYWKDDIRGTRLSIDSNTIFLEAELNPTQVISPTPGKLVKYLVRSGDHVFAGQQYAEIEIMKMQMPLVAKSDGVIELLRQPGSIIEAGDVIAKLTLDSPSKANESSLYRGELPVLGPPLIEGSRPNHKLRVLINRLENILNGYHENSGIETTLKELIKILRDGRLPYSEWDSQISTVRNRLPRQLNEGLGNLVKKSVSFPAKELHKLMKRYLEENTNDHVVYVALQPLLKISERYSEGLANHECEIFLKLIKKYYAVEKIFENHDIHEERNLLNLRRKDLTNLKEILCISLSHANIVAKNKLVTAILHEYEPLCQDSSKMSLKFRAVIHDLASLESKWAKEVSVKARSVLLRGIFPPIKKRKEHIKTLLQLHIKDTGAENIHSRNIYSCMRDFGNLIHSNLIQLQDLFFFFGHQDTALSSIASEIYARYAYGNYQLKSIKIHKGAPDLLMSWQFSSLRNYLVNPDGESDGFTKLSKPPSTSGKSSANSFGLLVNMRALESLEKTLDEVYEQIHIPEERLSSGENSLIVNILSPIRYRSENDLIKTLKIKLHENERGLSKLKVNRITFAFIAANAPAVKFYSFDGTTYDEIPQIRNMDPSYEAPLELGKMSNYKIRSLPTYDSSIRIFEGISKFTPLDKRFFVRKIINSFMYNDQKTTEENLKAEINAQVVYMLEHLGAVDISNSDLNHIFLSFNTVLNIPVHRLEEIVSTILKTHETRLFQERITDVEICISVECLETKKPAPLRLLISNKSGYVVKIETYYEKIGKNGNLILEPCSEQSHYSQKSLSLPYSVKDWLQPKRYKAQFMGTTYVYDFPGLFHQAAIQQWKRYFPKHKLNDSFFSWVELIEQNGNLIKVNREPGLNNIGMVAFEIMVQTPEYPEGRNMIVISNDITYNIGSFGPREDLFFDRVTNYARERGIPRIYLAANSGAKLGIAEELIPLFRVAWNDPSDPTKGFQYLYLAPKDMQLLKDSGKGNSVVVEHKMVYGEERYIIKAIVGFEEGLGVECLQGSGLIAGATSKAYRDIFTITAVTCRSVGIGSYLVRLGQRTIQVEDKPIILTGASAINKVLGTDIYTSNLQIGGTQIMYKNGIAHLTASNDMKAIEKIMTWLSYVPAKRDMSPPLLETMDRWDRDVDFKPAKQVPYEARWLIEGKWDSNNNFQSGLFDKDSFFETLSGWAKGVIVGRARLGGIPVGVIAVETKTIEEIIPADPANLDSSEFSVKEAGQVWYPNSAFKTAQTINDFNYGEQLPLIILANWRGFSGGQRDMYNEVLKYGSFIVDALVDYKQPILIYIPPFGELRGGSWVVIDPTINPEQMEMYADVESRGGVLEPDGVVSIKYRKEKMIETMIRLDSTYGHLRRTLTEKKLSLEKQNDLTKRLKIRERQLIPIYNQISIQFADLHDRSTRMLVKGVIRNELEWKKSRRFLYWRLRRRLNEGQVIKRLQKKTCDNKTKMKYDDLLKIVQSWYNDLDVNDDRAVVEFIERNSKKIGKNVEEFEISLLIDELKKKFEDRRGNIALEELTRLVDSKRKR.

The transit peptide at 1–104 (KGKTITHGQS…RGNIHKHTRL (104 aa)) directs the protein to the mitochondrion. Positions 134–635 (VISKILIANN…STGWLDDLIL (502 aa)) constitute a Biotin carboxylation domain. One can recognise an ATP-grasp domain in the interval 292–484 (KTNFVSVPDD…LPATQLQIAM (193 aa)). 332 to 337 (GGGGKG) serves as a coordination point for ATP. The active site involves Arg-459. The region spanning 763–837 (LEAELNPTQV…EAGDVIAKLT (75 aa)) is the Biotinyl-binding domain. Lys-804 carries the post-translational modification N6-biotinyllysine. In terms of domain architecture, CoA carboxyltransferase N-terminal spans 1532–1867 (PYSVKDWLQP…KRDMSPPLLE (336 aa)). The segment at 1532–2187 (PYSVKDWLQP…EGQVIKRLQK (656 aa)) is carboxyltransferase. Residues Arg-1776, Lys-2080, and Arg-2082 each contribute to the CoA site. Residues 1871–2187 (RWDRDVDFKP…EGQVIKRLQK (317 aa)) enclose the CoA carboxyltransferase C-terminal domain.

It depends on biotin as a cofactor.

The protein resides in the mitochondrion. The catalysed reaction is hydrogencarbonate + acetyl-CoA + ATP = malonyl-CoA + ADP + phosphate + H(+). The enzyme catalyses N(6)-biotinyl-L-lysyl-[protein] + hydrogencarbonate + ATP = N(6)-carboxybiotinyl-L-lysyl-[protein] + ADP + phosphate + H(+). Its pathway is lipid metabolism; malonyl-CoA biosynthesis; malonyl-CoA from acetyl-CoA: step 1/1. Catalyzes the rate-limiting reaction in the mitochondrial fatty acid synthesis (FAS) type II pathway. Responsible for the production of the mitochondrial malonyl-CoA, used for the biosynthesis of the cofactor lipoic acid. This protein carries three functions: biotin carboxyl carrier protein, biotin carboxylase, and carboxyltransferase. This is Acetyl-CoA carboxylase, mitochondrial (HFA1) from Saccharomyces cerevisiae (strain JAY291) (Baker's yeast).